A 225-amino-acid polypeptide reads, in one-letter code: Uracil-DNA glycosylase (225 aa).

Asp65 functions as the Proton acceptor in the catalytic mechanism.

Belongs to the uracil-DNA glycosylase (UDG) superfamily. UNG family.

The protein localises to the cytoplasm. It catalyses the reaction Hydrolyzes single-stranded DNA or mismatched double-stranded DNA and polynucleotides, releasing free uracil.. Functionally, excises uracil residues from the DNA which can arise as a result of misincorporation of dUMP residues by DNA polymerase or due to deamination of cytosine. In Lysinibacillus sphaericus (strain C3-41), this protein is Uracil-DNA glycosylase.